Consider the following 290-residue polypeptide: MDLFSPAKLNLFLKLHGKTSHGFHEMTTQYQVIDFGDNLYLESSNEDSLVCNLPELNTPQNLIWKSLQVFRDYTQIRSPVAWRLHKRIPIGAGVGGGSSNAATALYALNEHFQTQLPNSVLQELGKKIGMDVPLFFSSGSAIGVGCGEKILPYKDCKREERFVLYFSDQGVLTKDAFSYVRSEDFSQREENISLYKKENDLEKSVFRFRRDLEEKKQMLKKMWSPFHAHVCMSGAGATLFVSYPRKLEIDPSIAKAIHATIQNSQGVLVNSLRKHSGWFPCPDNLFATTR.

Residue K8 is part of the active site. Residue 89–99 participates in ATP binding; sequence PIGAGVGGGSS. The active site involves D131.

Belongs to the GHMP kinase family. IspE subfamily.

The catalysed reaction is 4-CDP-2-C-methyl-D-erythritol + ATP = 4-CDP-2-C-methyl-D-erythritol 2-phosphate + ADP + H(+). It functions in the pathway isoprenoid biosynthesis; isopentenyl diphosphate biosynthesis via DXP pathway; isopentenyl diphosphate from 1-deoxy-D-xylulose 5-phosphate: step 3/6. Catalyzes the phosphorylation of the position 2 hydroxy group of 4-diphosphocytidyl-2C-methyl-D-erythritol. The chain is 4-diphosphocytidyl-2-C-methyl-D-erythritol kinase from Chlamydia felis (strain Fe/C-56) (Chlamydophila felis).